The primary structure comprises 378 residues: DNA replication and repair protein RecF (378 aa).

Position 31 to 38 (31 to 38) interacts with ATP; it reads GENGSGKT.

Belongs to the RecF family.

It localises to the cytoplasm. In terms of biological role, the RecF protein is involved in DNA metabolism; it is required for DNA replication and normal SOS inducibility. RecF binds preferentially to single-stranded, linear DNA. It also seems to bind ATP. This is DNA replication and repair protein RecF from Teredinibacter turnerae (strain ATCC 39867 / T7901).